We begin with the raw amino-acid sequence, 94 residues long: Pyrimidine/purine nucleoside phosphorylase (94 aa).

The protein belongs to the nucleoside phosphorylase PpnP family.

The catalysed reaction is a purine D-ribonucleoside + phosphate = a purine nucleobase + alpha-D-ribose 1-phosphate. It carries out the reaction adenosine + phosphate = alpha-D-ribose 1-phosphate + adenine. The enzyme catalyses cytidine + phosphate = cytosine + alpha-D-ribose 1-phosphate. It catalyses the reaction guanosine + phosphate = alpha-D-ribose 1-phosphate + guanine. The catalysed reaction is inosine + phosphate = alpha-D-ribose 1-phosphate + hypoxanthine. It carries out the reaction thymidine + phosphate = 2-deoxy-alpha-D-ribose 1-phosphate + thymine. The enzyme catalyses uridine + phosphate = alpha-D-ribose 1-phosphate + uracil. It catalyses the reaction xanthosine + phosphate = alpha-D-ribose 1-phosphate + xanthine. Catalyzes the phosphorolysis of diverse nucleosides, yielding D-ribose 1-phosphate and the respective free bases. Can use uridine, adenosine, guanosine, cytidine, thymidine, inosine and xanthosine as substrates. Also catalyzes the reverse reactions. The polypeptide is Pyrimidine/purine nucleoside phosphorylase (Salmonella agona (strain SL483)).